Here is a 178-residue protein sequence, read N- to C-terminus: DNA-directed RNA polymerase subunit beta (178 aa).

The protein belongs to the RNA polymerase beta chain family. In terms of assembly, the RNAP catalytic core consists of 2 alpha, 1 beta, 1 beta' and 1 omega subunit. When a sigma factor is associated with the core the holoenzyme is formed, which can initiate transcription.

The catalysed reaction is RNA(n) + a ribonucleoside 5'-triphosphate = RNA(n+1) + diphosphate. In terms of biological role, DNA-dependent RNA polymerase catalyzes the transcription of DNA into RNA using the four ribonucleoside triphosphates as substrates. The protein is DNA-directed RNA polymerase subunit beta (rpoB) of Liberibacter asiaticus (Citrus greening disease).